A 998-amino-acid polypeptide reads, in one-letter code: Collagen alpha-1(I) chain (998 aa).

A disordered region spans residues glycine 1–proline 998. A 4-hydroxyproline mark is found at proline 18, proline 21, proline 24, proline 33, proline 48, proline 63, proline 69, proline 78, and proline 84. Positions proline 26–methionine 39 are enriched in low complexity. The span at asparagine 51–glutamate 65 shows a compositional bias: basic and acidic residues. Lysine 87 carries the post-translational modification 5-hydroxylysine; alternate. Residue lysine 87 is glycosylated (O-linked (Gal...) hydroxylysine; alternate). Serine 93 bears the Phosphoserine mark. A compositionally biased stretch (low complexity) spans aspartate 101 to leucine 115. Proline 116, proline 122, proline 143, proline 152, proline 155, proline 182, proline 185, proline 197, proline 203, proline 212, proline 218, proline 221, and proline 236 each carry 4-hydroxyproline. Low complexity predominate over residues proline 122–alanine 140. A compositionally biased stretch (pro residues) spans proline 142–phenylalanine 154. A compositionally biased stretch (low complexity) spans alanine 188–proline 238. Lysine 239 is modified (5-hydroxylysine). A 4-hydroxyproline mark is found at proline 245, proline 248, proline 260, proline 269, proline 284, proline 290, proline 299, and proline 305. The segment covering glycine 294–glycine 303 has biased composition (gly residues). Lysine 314 bears the 5-hydroxylysine mark. A 4-hydroxyproline mark is found at proline 323, proline 332, proline 338, proline 344, proline 353, proline 356, proline 365, proline 374, proline 380, proline 392, proline 401, proline 410, proline 413, proline 431, proline 449, proline 455, proline 461, proline 467, proline 473, proline 479, proline 491, proline 500, proline 511, proline 523, proline 526, proline 532, proline 538, and proline 547. Residues lysine 347–proline 401 show a composition bias toward low complexity. The span at glutamine 443–glutamine 470 shows a compositional bias: low complexity. Residues asparagine 513–glutamine 535 show a composition bias toward low complexity. Lysine 559 bears the 5-hydroxylysine mark. 4-hydroxyproline occurs at positions 565 and 580. The segment covering threonine 592–alanine 606 has biased composition (low complexity). Serine 595 is subject to Phosphoserine. 4-hydroxyproline is present on residues proline 607, proline 613, proline 616, proline 625, proline 631, proline 649, proline 658, and proline 667. Positions alanine 619 to alanine 646 are enriched in low complexity. Residues proline 648 to proline 660 are compositionally biased toward pro residues. Residue lysine 670 is modified to 5-hydroxylysine. Residues serine 675–valine 691 show a composition bias toward low complexity. 4-hydroxyproline is present on residues proline 679 and proline 685. Proline 693 carries the 3-hydroxyproline modification. 4-hydroxyproline occurs at positions 694, 703, 706, 727, 736, 744, 753, 771, 780, 783, 789, 804, 810, 816, 825, and 831. A compositionally biased stretch (low complexity) spans glutamate 720–glutamate 729. A compositionally biased stretch (low complexity) spans lysine 741–alanine 762. The segment covering proline 803 to alanine 813 has biased composition (pro residues). The segment covering proline 815–serine 830 has biased composition (low complexity). Lysine 840 bears the 5-hydroxylysine mark. The segment covering proline 848–valine 863 has biased composition (pro residues). 4-hydroxyproline is present on residues proline 851, proline 854, and proline 857. Residues alanine 884–proline 898 are compositionally biased toward low complexity. Residues arginine 899–isoleucine 913 are compositionally biased toward basic and acidic residues. Lysine 902 is subject to 5-hydroxylysine. The residue at position 914 (lysine 914) is a 5-hydroxylysine; alternate. A glycan (O-linked (Gal...) hydroxylysine; alternate) is linked at lysine 914. 4-hydroxyproline is present on residues proline 929, proline 932, proline 950, and proline 965. The span at proline 932–proline 965 shows a compositional bias: low complexity. Proline 970 bears the 3-hydroxyproline mark. Residue proline 971 is modified to 4-hydroxyproline. Over residues valine 983–proline 998 the composition is skewed to pro residues. 3-hydroxyproline is present on proline 985. Residue proline 986 is modified to 4-hydroxyproline. A 3-hydroxyproline modification is found at proline 988. The residue at position 989 (proline 989) is a 4-hydroxyproline. The residue at position 991 (proline 991) is a 3-hydroxyproline. A 4-hydroxyproline mark is found at proline 992, proline 995, and proline 998.

The protein belongs to the fibrillar collagen family. Trimers of one alpha 2(I) and two alpha 1(I) chains. In terms of processing, contains mostly 4-hydroxyproline. Proline residues at the third position of the tripeptide repeating unit (G-X-Y) are hydroxylated in some or all of the chains. Post-translationally, contains 3-hydroxyproline at a few sites. This modification occurs on the first proline residue in the sequence motif Gly-Pro-Hyp, where Hyp is 4-hydroxyproline. Lysine residues at the third position of the tripeptide repeating unit (G-X-Y) are 5-hydroxylated in some or all of the chains. In terms of processing, O-glycosylated on hydroxylated lysine residues. The O-linked glycan consists of a Glc-Gal disaccharide. In terms of tissue distribution, expressed in bones.

The protein resides in the secreted. It is found in the extracellular space. Its subcellular location is the extracellular matrix. Functionally, type I collagen is a member of group I collagen (fibrillar forming collagen). The protein is Collagen alpha-1(I) chain of Glyptodon sp. (strain SLP-2019) (Giant armadillo).